A 151-amino-acid chain; its full sequence is Probable transcriptional regulator syrB3 (151 aa).

Residues 1-65 (MVDESNAGPV…QERSEKLRLI (65 aa)) are disordered. Residues 7 to 23 (AGPVAPAVVADAEVKAP) are compositionally biased toward low complexity. The segment covering 52–65 (GYSEQERSEKLRLI) has biased composition (basic and acidic residues).

This sequence belongs to the SyrB family.

This chain is Probable transcriptional regulator syrB3 (syrB3), found in Rhizobium meliloti (strain 1021) (Ensifer meliloti).